The sequence spans 230 residues: Sugar fermentation stimulation protein homolog (230 aa).

It belongs to the SfsA family.

The polypeptide is Sugar fermentation stimulation protein homolog (Clostridium botulinum (strain Alaska E43 / Type E3)).